The following is a 278-amino-acid chain: MKNWRLNNVTESAFEKTGPIPRSIAKTFEKFKKELEPNSESEIIEEFRVSRYQTASSIKYLVLLVTVPLLINQASKSLVFSPFIDYFWNDNQSDIFLNESQEERAFSELQRFEEKIHFEILIGQSPPLSQETIDKEIKNKAIELAQFYVQESTDAIKNLLADILAFITFAYLIFTGGRQIAVLKSFINELIYGLSDTAKAFLIILFTDIFVGFHSTHGWEVVLENGLRHFGLPENRDLIFLFIATFPVVLDTVFKYWIFRYLNQVSPSAVATYHEMNE.

Helical transmembrane passes span 60–80 (YLVL…SLVF), 163–183 (ILAF…IAVL), 201–221 (FLII…GWEV), and 239–259 (IFLF…YWIF).

It belongs to the CemA family.

The protein resides in the plastid. It is found in the chloroplast inner membrane. The enzyme catalyses K(+)(in) + H(+)(out) = K(+)(out) + H(+)(in). Functionally, contributes to K(+)/H(+) antiport activity by supporting proton efflux to control proton extrusion and homeostasis in chloroplasts in a light-dependent manner to modulate photosynthesis. Prevents excessive induction of non-photochemical quenching (NPQ) under continuous-light conditions. Indirectly promotes efficient inorganic carbon uptake into chloroplasts. In Guillardia theta (Cryptophyte), this protein is Potassium/proton antiporter CemA.